Here is a 406-residue protein sequence, read N- to C-terminus: MARAFLFVLDSFGIGNAPDAEAFGDLGADTLGHIAEFCAAGAADRAGLREGPLHLPNMSALGLMHAARLATGRLPAGMALPERVYGIYGAASEVSRGKDTPSGHWEIAGTPVTFDWGYFPAEGDAFPPELVEAICREGDVPGILGNCHASGTDIIARHGEEHMRSGKPICYTSSDSVFQIAAHEQTFGLERLLNLCEVVRRLVDDYNIGRVIARPFVGSDPGSFTRTGNRRDYSVLPPEPTVLDRLQEAGRTVHAIGKIGDIFAHQGVTRLTKANGNMALFDASLEAIEEAEDGALVFTNFVDFDMLYGHRRDVSGYAAALEAFDARLPDLDRRLKPGDMVILTADHGCDPTWRGTDHTRERVPVLMFGPTLRSRSFGIADSFAHIGETVARHLGIGVGPHGRSLI.

Mn(2+) contacts are provided by D10, D305, H310, D346, H347, and H358.

This sequence belongs to the phosphopentomutase family. The cofactor is Mn(2+).

The protein resides in the cytoplasm. The catalysed reaction is 2-deoxy-alpha-D-ribose 1-phosphate = 2-deoxy-D-ribose 5-phosphate. It catalyses the reaction alpha-D-ribose 1-phosphate = D-ribose 5-phosphate. The protein operates within carbohydrate degradation; 2-deoxy-D-ribose 1-phosphate degradation; D-glyceraldehyde 3-phosphate and acetaldehyde from 2-deoxy-alpha-D-ribose 1-phosphate: step 1/2. In terms of biological role, isomerase that catalyzes the conversion of deoxy-ribose 1-phosphate (dRib-1-P) and ribose 1-phosphate (Rib-1-P) to deoxy-ribose 5-phosphate (dRib-5-P) and ribose 5-phosphate (Rib-5-P), respectively. The protein is Phosphopentomutase of Rhizobium meliloti (strain 1021) (Ensifer meliloti).